Here is a 533-residue protein sequence, read N- to C-terminus: L-aspartate oxidase (533 aa).

FAD is bound by residues 16-19 (SGAA), lysine 38, 45-52 (ATFYAQGG), and aspartate 223. Residue arginine 290 is the Proton donor/acceptor of the active site. Residues glutamate 375 and 391–392 (SL) each bind FAD.

It belongs to the FAD-dependent oxidoreductase 2 family. NadB subfamily. It depends on FAD as a cofactor.

It is found in the cytoplasm. It catalyses the reaction L-aspartate + O2 = iminosuccinate + H2O2. It functions in the pathway cofactor biosynthesis; NAD(+) biosynthesis; iminoaspartate from L-aspartate (oxidase route): step 1/1. In terms of biological role, catalyzes the oxidation of L-aspartate to iminoaspartate, the first step in the de novo biosynthesis of NAD(+). This Yersinia pestis protein is L-aspartate oxidase (nadB).